The chain runs to 299 residues: 5-azacytidine resistance protein azr1 (299 aa).

The 259-residue stretch at 35-293 (KSHFPSPATL…DDTTITCLLI (259 aa)) folds into the PPM-type phosphatase domain.

In terms of biological role, confers azacytidine resistance in high copy. The sequence is that of 5-azacytidine resistance protein azr1 (azr1) from Schizosaccharomyces pombe (strain 972 / ATCC 24843) (Fission yeast).